Here is a 440-residue protein sequence, read N- to C-terminus: Probable pectate lyase 10 (440 aa).

Positions 1 to 28 (MVIFSRSFLALSTTLIILALCINSSTMA) are cleaved as a signal peptide. Residues 32–56 (EDLNSHSSSNSSTANKLPNDDGAWN) are disordered. Residues N41 and N76 are each glycosylated (N-linked (GlcNAc...) asparagine). Ca(2+) contacts are provided by D238, D262, and D266. Residue R318 is part of the active site.

The protein belongs to the polysaccharide lyase 1 family. Requires Ca(2+) as cofactor.

The enzyme catalyses Eliminative cleavage of (1-&gt;4)-alpha-D-galacturonan to give oligosaccharides with 4-deoxy-alpha-D-galact-4-enuronosyl groups at their non-reducing ends.. Its pathway is glycan metabolism; pectin degradation; 2-dehydro-3-deoxy-D-gluconate from pectin: step 2/5. The protein is Probable pectate lyase 10 of Arabidopsis thaliana (Mouse-ear cress).